A 137-amino-acid polypeptide reads, in one-letter code: NADPH-dependent 7-cyano-7-deazaguanine reductase (137 aa).

The active-site Thioimide intermediate is cysteine 50. Catalysis depends on aspartate 57, which acts as the Proton donor. Substrate contacts are provided by residues 72–74 and 91–92; these read VEL and HE.

This sequence belongs to the GTP cyclohydrolase I family. QueF type 1 subfamily.

It localises to the cytoplasm. It catalyses the reaction 7-aminomethyl-7-carbaguanine + 2 NADP(+) = 7-cyano-7-deazaguanine + 2 NADPH + 3 H(+). The protein operates within tRNA modification; tRNA-queuosine biosynthesis. Its function is as follows. Catalyzes the NADPH-dependent reduction of 7-cyano-7-deazaguanine (preQ0) to 7-aminomethyl-7-deazaguanine (preQ1). The chain is NADPH-dependent 7-cyano-7-deazaguanine reductase from Synechocystis sp. (strain ATCC 27184 / PCC 6803 / Kazusa).